Reading from the N-terminus, the 401-residue chain is Mu-type opioid receptor (401 aa).

Topologically, residues 1–69 are extracellular; it reads MDSGAVPTNA…CPSAGSPSMI (69 aa). Asn-9, Asn-12, Asn-34, Asn-41, and Asn-49 each carry an N-linked (GlcNAc...) asparagine glycan. Residues 70-94 traverse the membrane as a helical segment; sequence TAIIIMALYSIVCVVGLFGNFLVMY. The Cytoplasmic segment spans residues 95–107; that stretch reads VIVRYTKMKTATN. A helical membrane pass occupies residues 108 to 132; that stretch reads IYIFNLALADALATSTLPFQSVNYL. At 133 to 143 the chain is on the extracellular side; that stretch reads MGTWPFGTILC. A disulfide bridge links Cys-143 with Cys-220. A helical membrane pass occupies residues 144 to 166; that stretch reads KIVISIDYYNMFTSIFTLCTMSV. Over 167–186 the chain is Cytoplasmic; sequence DRYIAVCHPVKALDLRTPRN. A Phosphotyrosine modification is found at Tyr-169. A helical membrane pass occupies residues 187 to 208; the sequence is AKIINICNWILSSAIGLPVMFM. Residues 209-231 are Extracellular-facing; that stretch reads ATTKYRQGSIDCTLTFSHPTWYW. Residues 232–256 traverse the membrane as a helical segment; the sequence is ENLLKICVFIFAFIMPILIITVCYG. Over 257–280 the chain is Cytoplasmic; sequence LMILRLKSVRMLSGSKEKDRNLRR. The chain crosses the membrane as a helical span at residues 281–307; the sequence is ITRMVLVVVAVFIVCWTPIHIYVIIKA. At 308 to 315 the chain is on the extracellular side; sequence LITIPETT. The helical transmembrane segment at 316-339 threads the bilayer; the sequence is FQTVSWHFCIALGYTNSCLNPVLY. The NPxxY; plays a role in stabilizing the activated conformation of the receptor motif lies at 335–339; the sequence is NPVLY. Residues 340 to 401 are Cytoplasmic-facing; it reads AFLDENFKRC…NLEAETTPLP (62 aa). Cys-354 carries the S-palmitoyl cysteine lipid modification. Residues 365–389 form a disordered region; sequence NSTRIRQNTRDHPSTANTVDRTNHQ. At Ser-366 the chain carries Phosphoserine. Residue Thr-373 is modified to Phosphothreonine. A Phosphoserine modification is found at Ser-378. Thr-397 is subject to Phosphothreonine.

The protein belongs to the G-protein coupled receptor 1 family. As to quaternary structure, forms homooligomers and heterooligomers with other GPCRs, such as OPRD1, OPRK1, OPRL1, NPFFR2, ADRA2A, SSTR2, CNR1 and CCR5 (probably in dimeric forms). Interacts with heterotrimeric G proteins; interaction with a heterotrimeric complex containing GNAI1, GNB1 and GNG2 stabilizes the active conformation of the receptor and increases its affinity for endomorphin-2, the synthetic opioid peptide DAMGO and for morphinan agonists. Interacts with PPL; the interaction disrupts agonist-mediated G-protein activation. Interacts (via C-terminus) with DNAJB4 (via C-terminus). Interacts with calmodulin; the interaction inhibits the constitutive activity of OPRM1; it abolishes basal and attenuates agonist-stimulated G-protein coupling. Interacts with FLNA, PLD2, RANBP9 and WLS and GPM6A. Interacts with RTP4. Interacts with SYP and GNAS. Interacts with RGS9, RGS17, RGS20, RGS4, PPP1R9B and HINT1. In terms of processing, phosphorylated. Differentially phosphorylated in basal and agonist-induced conditions. Agonist-mediated phosphorylation modulates receptor internalization. Phosphorylated by GRK2 in a agonist-dependent manner. Phosphorylation at Tyr-169 requires receptor activation, is dependent on non-receptor protein tyrosine kinase Src and results in a decrease in agonist efficacy by reducing G-protein coupling efficiency. Phosphorylated on tyrosine residues; the phosphorylation is involved in agonist-induced G-protein-independent receptor down-regulation. Phosphorylation at Ser-378 is involved in G-protein-dependent but not beta-arrestin-dependent activation of the ERK pathway. Post-translationally, ubiquitinated. A basal ubiquitination seems not to be related to degradation. Ubiquitination is increased upon formation of OPRM1:OPRD1 oligomers leading to proteasomal degradation; the ubiquitination is diminished by RTP4.

It is found in the cell membrane. The protein localises to the cell projection. Its subcellular location is the axon. The protein resides in the perikaryon. It localises to the dendrite. It is found in the endosome. Functionally, receptor for endogenous opioids such as beta-endorphin and endomorphin. Receptor for natural and synthetic opioids including morphine, heroin, DAMGO, fentanyl, etorphine, buprenorphin and methadone. Also activated by enkephalin peptides, such as Met-enkephalin or Met-enkephalin-Arg-Phe, with higher affinity for Met-enkephalin-Arg-Phe. Agonist binding to the receptor induces coupling to an inactive GDP-bound heterotrimeric G-protein complex and subsequent exchange of GDP for GTP in the G-protein alpha subunit leading to dissociation of the G-protein complex with the free GTP-bound G-protein alpha and the G-protein beta-gamma dimer activating downstream cellular effectors. The agonist- and cell type-specific activity is predominantly coupled to pertussis toxin-sensitive G(i) and G(o) G alpha proteins, GNAI1, GNAI2, GNAI3 and GNAO1, and to a lesser extent to pertussis toxin-insensitive G alpha proteins GNAZ and GNA15. They mediate an array of downstream cellular responses, including inhibition of adenylate cyclase activity and both N-type and L-type calcium channels, activation of inward rectifying potassium channels, mitogen-activated protein kinase (MAPK), phospholipase C (PLC), phosphoinositide/protein kinase (PKC), phosphoinositide 3-kinase (PI3K) and regulation of NF-kappa-B. Also couples to adenylate cyclase stimulatory G alpha proteins. The selective temporal coupling to G-proteins and subsequent signaling can be regulated by RGSZ proteins, such as RGS9, RGS17 and RGS4. Phosphorylation by members of the GPRK subfamily of Ser/Thr protein kinases and association with beta-arrestins is involved in short-term receptor desensitization. Beta-arrestins associate with the GPRK-phosphorylated receptor and uncouple it from the G-protein thus terminating signal transduction. The phosphorylated receptor is internalized through endocytosis via clathrin-coated pits which involves beta-arrestins. The activation of the ERK pathway occurs either in a G-protein-dependent or a beta-arrestin-dependent manner and is regulated by agonist-specific receptor phosphorylation. Acts as a class A G-protein coupled receptor (GPCR) which dissociates from beta-arrestin at or near the plasma membrane and undergoes rapid recycling. Receptor down-regulation pathways are varying with the agonist and occur dependent or independent of G-protein coupling. Endogenous ligands induce rapid desensitization, endocytosis and recycling. Heterooligomerization with other GPCRs can modulate agonist binding, signaling and trafficking properties. Involved in neurogenesis. This is Mu-type opioid receptor (OPRM1) from Bos taurus (Bovine).